The chain runs to 252 residues: Phosphoglycolate phosphatase (252 aa).

The active-site Nucleophile is Asp-13. Mg(2+)-binding residues include Asp-13, Asp-15, and Asp-192.

Belongs to the HAD-like hydrolase superfamily. CbbY/CbbZ/Gph/YieH family. Monomer. It depends on Mg(2+) as a cofactor. The cofactor is chloride.

The enzyme catalyses 2-phosphoglycolate + H2O = glycolate + phosphate. Its pathway is organic acid metabolism; glycolate biosynthesis; glycolate from 2-phosphoglycolate: step 1/1. In terms of biological role, specifically catalyzes the dephosphorylation of 2-phosphoglycolate. Is involved in the dissimilation of the intracellular 2-phosphoglycolate formed during the DNA repair of 3'-phosphoglycolate ends, a major class of DNA lesions induced by oxidative stress. This Shigella dysenteriae serotype 1 (strain Sd197) protein is Phosphoglycolate phosphatase.